The following is a 78-amino-acid chain: Apolipoprotein C-I (78 aa).

An N-terminal signal peptide occupies residues 1–26 (MRLILWLPVLVVVLLMVLEGPAPAQG).

Belongs to the apolipoprotein C1 family.

The protein localises to the secreted. Its function is as follows. Inhibitor of lipoprotein binding to the low density lipoprotein (LDL) receptor, LDL receptor-related protein, and very low density lipoprotein (VLDL) receptor. Associates with high density lipoproteins (HDL) and the triacylglycerol-rich lipoproteins in the plasma and makes up about 10% of the protein of the VLDL and 2% of that of HDL. Appears to interfere directly with fatty acid uptake and is also the major plasma inhibitor of cholesteryl ester transfer protein (CETP). Binds free fatty acids and reduces their intracellular esterification. Modulates the interaction of APOE with beta-migrating VLDL and inhibits binding of beta-VLDL to the LDL receptor-related protein. This is Apolipoprotein C-I (APOC1) from Lynx pardinus (Iberian lynx).